The primary structure comprises 242 residues: uncharacterized protein (242 aa).

This is an uncharacterized protein from Agrobacterium vitis (Rhizobium vitis).